We begin with the raw amino-acid sequence, 181 residues long: ATP synthase subunit delta (181 aa).

The protein belongs to the ATPase delta chain family. As to quaternary structure, F-type ATPases have 2 components, F(1) - the catalytic core - and F(0) - the membrane proton channel. F(1) has five subunits: alpha(3), beta(3), gamma(1), delta(1), epsilon(1). F(0) has three main subunits: a(1), b(2) and c(10-14). The alpha and beta chains form an alternating ring which encloses part of the gamma chain. F(1) is attached to F(0) by a central stalk formed by the gamma and epsilon chains, while a peripheral stalk is formed by the delta and b chains.

The protein resides in the cell membrane. Functionally, f(1)F(0) ATP synthase produces ATP from ADP in the presence of a proton or sodium gradient. F-type ATPases consist of two structural domains, F(1) containing the extramembraneous catalytic core and F(0) containing the membrane proton channel, linked together by a central stalk and a peripheral stalk. During catalysis, ATP synthesis in the catalytic domain of F(1) is coupled via a rotary mechanism of the central stalk subunits to proton translocation. In terms of biological role, this protein is part of the stalk that links CF(0) to CF(1). It either transmits conformational changes from CF(0) to CF(1) or is implicated in proton conduction. This Clostridium kluyveri (strain NBRC 12016) protein is ATP synthase subunit delta.